The following is a 207-amino-acid chain: Ribonuclease HII (207 aa).

One can recognise an RNase H type-2 domain in the interval 18–207; it reads TYLSGSDEAG…PIKKISKETS (190 aa). A divalent metal cation is bound by residues D24, E25, and D116.

The protein belongs to the RNase HII family. Mn(2+) serves as cofactor. It depends on Mg(2+) as a cofactor.

The protein localises to the cytoplasm. It carries out the reaction Endonucleolytic cleavage to 5'-phosphomonoester.. Its function is as follows. Endonuclease that specifically degrades the RNA of RNA-DNA hybrids. The sequence is that of Ribonuclease HII from Mycoplasma capricolum subsp. capricolum (strain California kid / ATCC 27343 / NCTC 10154).